Reading from the N-terminus, the 646-residue chain is Interferon-induced GTP-binding protein MxA (646 aa).

Positions 34 to 307 (DLALPAIAVI…LVHHIQKSLP (274 aa)) constitute a Dynamin-type G domain. The G1 motif stretch occupies residues 44–51 (GDQSSGKS). A GTP-binding site is contributed by 44 to 51 (GDQSSGKS). The interval 69 to 71 (VTR) is G2 motif. Residues 145-148 (DLPG) form a G3 motif region. GTP-binding positions include 145–149 (DLPGI) and 214–217 (TKPD). The interval 214 to 217 (TKPD) is G4 motif. A G5 motif region spans residues 246-249 (RCRG). The GED domain maps to 546 to 637 (LREMRLHLKS…PLGHLLEVTF (92 aa)).

It belongs to the TRAFAC class dynamin-like GTPase superfamily. Dynamin/Fzo/YdjA family.

The protein localises to the cytoplasm. The sequence is that of Interferon-induced GTP-binding protein MxA (mxa) from Danio rerio (Zebrafish).